The sequence spans 354 residues: NAD-dependent epimerase/dehydratase ALT6 (354 aa).

The NADP(+) site is built by K41 and Y174.

The protein belongs to the NAD(P)-dependent epimerase/dehydratase family. Dihydroflavonol-4-reductase subfamily.

Its pathway is mycotoxin biosynthesis. In terms of biological role, NAD-dependent epimerase/dehydratase; part of the gene cluster that mediates the biosynthesis of the host-selective toxins (HSTs) AAL-toxins, sphinganine-analog mycotoxins responsible for Alternaria stem canker on tomato by the tomato pathotype. The biosynthesis starts with the polyketide synthase ALT1-catalyzed C-16 carbon chain assembly from one starter acetyl-CoA unit with malonyl-CoA extender units. ALT1 also selectively transfers methyl groups at the first and the third cycle of chain elongation for AAL toxin. The C-16 polyketide chain is released from the enzyme by a nucleophilic attack of a carbanion, which is derived from R-carbon of glycin by decarboxylation, on the carbonyl carbon of polyketide acyl chain. This step is probably catalyzed by a pyridoxal 5'-phosphate-dependent aminoacyl transferase ALT4. The respective functions of the other enzymes encoded by the cluster have still to be elucidated. The sphingosine N-acyltransferase-like protein ALT7 seems not to act as a resistance/self-tolerance factor against the toxin in the toxin biosynthetic gene cluster, contrary to what is expected. The protein is NAD-dependent epimerase/dehydratase ALT6 of Alternaria alternata (Alternaria rot fungus).